Reading from the N-terminus, the 365-residue chain is Fructose-1,6-bisphosphatase class 1 2 (365 aa).

Mg(2+)-binding residues include Glu-100, Asp-122, Leu-124, and Asp-125. Residues 125 to 128 (DGSS) and Asn-221 contribute to the substrate site. Glu-293 provides a ligand contact to Mg(2+).

The protein belongs to the FBPase class 1 family. In terms of assembly, homotetramer. Requires Mg(2+) as cofactor.

The protein localises to the cytoplasm. It catalyses the reaction beta-D-fructose 1,6-bisphosphate + H2O = beta-D-fructose 6-phosphate + phosphate. The protein operates within carbohydrate biosynthesis; gluconeogenesis. This is Fructose-1,6-bisphosphatase class 1 2 from Cupriavidus metallidurans (strain ATCC 43123 / DSM 2839 / NBRC 102507 / CH34) (Ralstonia metallidurans).